We begin with the raw amino-acid sequence, 307 residues long: 2,4-diacetylphloroglucinol hydrolase (307 aa).

Residues histidine 142, glutamate 173, histidine 283, and glutamate 287 each contribute to the Zn(2+) site.

It belongs to the DAPG/phloretin hydrolase family. It depends on Zn(2+) as a cofactor.

The enzyme catalyses 2,4-diacetylphloroglucinol + H2O = 2-acetylphloroglucinol + acetate. Its activity is regulated as follows. Activity is strongly reduced by pyoluteorin, an antifungal compound produced by the bacterium. Its function is as follows. Hydrolase that specifically degrades the potent antimicrobial compound 2,4-diacetylphloroglucinol (DAPG) to equimolar amounts of mildly toxic monoacetylphloroglucinol (MAPG) and acetate. Does not degrade other compounds with structures similar to DAPG, such as MAPG and triacetylphloroglucinol, suggesting strict substrate specificity. Degradation of DAPG to MAPG may provide an additional means of fine-tuning levels of this antibiotic or may help avoid accumulation of a metabolite that at high levels may become toxic to the producing bacterium. In Pseudomonas protegens (strain DSM 19095 / LMG 27888 / CFBP 6595 / CHA0), this protein is 2,4-diacetylphloroglucinol hydrolase.